Here is a 376-residue protein sequence, read N- to C-terminus: Glucose-1-phosphate adenylyltransferase (376 aa).

Alpha-D-glucose 1-phosphate contacts are provided by residues Tyr101, Gly166, 181–182, and Ser192; that span reads EK.

Belongs to the bacterial/plant glucose-1-phosphate adenylyltransferase family. In terms of assembly, homotetramer.

The catalysed reaction is alpha-D-glucose 1-phosphate + ATP + H(+) = ADP-alpha-D-glucose + diphosphate. Its pathway is glycan biosynthesis; glycogen biosynthesis. In terms of biological role, involved in the biosynthesis of ADP-glucose, a building block required for the elongation reactions to produce glycogen. Catalyzes the reaction between ATP and alpha-D-glucose 1-phosphate (G1P) to produce pyrophosphate and ADP-Glc. The sequence is that of Glucose-1-phosphate adenylyltransferase from Bacillus cereus (strain ZK / E33L).